A 129-amino-acid polypeptide reads, in one-letter code: Small ribosomal subunit protein uS9 (129 aa).

Positions 107–129 are disordered; that stretch reads SRVVERKKPGKKKARRSPQFSKR. Over residues 114-129 the composition is skewed to basic residues; that stretch reads KPGKKKARRSPQFSKR.

Belongs to the universal ribosomal protein uS9 family.

The polypeptide is Small ribosomal subunit protein uS9 (Sulfurovum sp. (strain NBC37-1)).